We begin with the raw amino-acid sequence, 567 residues long: TGF-beta receptor type-2 (567 aa).

Positions 1–22 (MGRGLLRGLWPLHIVLWTRIAS) are cleaved as a signal peptide. Residues 23–166 (TIPPHVQKSV…NPDLLLVIFQ (144 aa)) lie on the Extracellular side of the membrane. Cystine bridges form between cysteine 51-cysteine 84, cysteine 54-cysteine 71, cysteine 61-cysteine 67, cysteine 77-cysteine 101, cysteine 121-cysteine 136, and cysteine 138-cysteine 143. Asparagine 70 and asparagine 94 each carry an N-linked (GlcNAc...) asparagine glycan. Asparagine 154 is a glycosylation site (N-linked (GlcNAc...) asparagine). The helical transmembrane segment at 167–187 (VTGISLLPPLGVAISVIIIFY) threads the bilayer. The Cytoplasmic segment spans residues 188-567 (CYRVNRQQKL…PEDGSLNTTK (380 aa)). The 301-residue stretch at 244–544 (IELDTLVGKG…AERFSELEHL (301 aa)) folds into the Protein kinase domain. ATP is bound by residues 250–258 (VGKGRFAEV) and lysine 277. Aspartate 379 acts as the Proton acceptor in catalysis. Phosphoserine occurs at positions 409, 548, and 553. A sufficient for interaction with CLU region spans residues 439–567 (VESFKQTDVY…PEDGSLNTTK (129 aa)).

The protein belongs to the protein kinase superfamily. TKL Ser/Thr protein kinase family. TGFB receptor subfamily. As to quaternary structure, homodimer. Heterohexamer; TGFB1, TGFB2 and TGFB3 homodimeric ligands assemble a functional receptor composed of two TGFBR1 and TGFBR2 heterodimers to form a ligand-receptor heterohexamer. The respective affinity of TGFRB1 and TGFRB2 for the ligands may modulate the kinetics of assembly of the receptor and may explain the different biological activities of TGFB1, TGFB2 and TGFB3. Component of a complex composed of TSC22D1 (via N-terminus), TGFBR1 and TGFBR2; the interaction between TSC22D1 and TGFBR1 is inhibited by SMAD7 and promoted by TGFB1. Interacts with DAXX. Interacts with DYNLT4. Interacts with ZFYVE9; ZFYVE9 recruits SMAD2 and SMAD3 to the TGF-beta receptor. Interacts with and is activated by SCUBE3; this interaction does not affect TGFB1-binding to TGFBR2. Interacts with VPS39; this interaction is independent of the receptor kinase activity and of the presence of TGF-beta. Interacts with CLU. Homodimer; disulfide-linked. Mg(2+) is required as a cofactor. Requires Mn(2+) as cofactor. In terms of processing, phosphorylated on a Ser/Thr residue in the cytoplasmic domain.

The protein localises to the cell membrane. The protein resides in the membrane raft. It localises to the secreted. The enzyme catalyses L-threonyl-[receptor-protein] + ATP = O-phospho-L-threonyl-[receptor-protein] + ADP + H(+). The catalysed reaction is L-seryl-[receptor-protein] + ATP = O-phospho-L-seryl-[receptor-protein] + ADP + H(+). Functionally, transmembrane serine/threonine kinase forming with the TGF-beta type I serine/threonine kinase receptor, TGFBR1, the non-promiscuous receptor for the TGF-beta cytokines TGFB1, TGFB2 and TGFB3. Transduces the TGFB1, TGFB2 and TGFB3 signal from the cell surface to the cytoplasm and thus regulates a plethora of physiological and pathological processes including cell cycle arrest in epithelial and hematopoietic cells, control of mesenchymal cell proliferation and differentiation, wound healing, extracellular matrix production, immunosuppression and carcinogenesis. The formation of the receptor complex composed of 2 TGFBR1 and 2 TGFBR2 molecules symmetrically bound to the cytokine dimer results in the phosphorylation and activation of TGFBR1 by the constitutively active TGFBR2. Activated TGFBR1 phosphorylates SMAD2 which dissociates from the receptor and interacts with SMAD4. The SMAD2-SMAD4 complex is subsequently translocated to the nucleus where it modulates the transcription of the TGF-beta-regulated genes. This constitutes the canonical SMAD-dependent TGF-beta signaling cascade. Also involved in non-canonical, SMAD-independent TGF-beta signaling pathways. In terms of biological role, has transforming growth factor beta-activated receptor activity. Binds TGFB1, TGFB2 and TGFB3 in the picomolar affinity range without the participation of additional receptors. Blocks activation of SMAD2 and SMAD3 by TGFB1. The chain is TGF-beta receptor type-2 (TGFBR2) from Homo sapiens (Human).